We begin with the raw amino-acid sequence, 173 residues long: RNA pyrophosphohydrolase (173 aa).

In terms of domain architecture, Nudix hydrolase spans 6–149 (GFRANVGIII…KRDVYRKVMK (144 aa)). The Nudix box motif lies at 38 to 59 (GGVDEGESAEEAMYRELYEEVG).

This sequence belongs to the Nudix hydrolase family. RppH subfamily. A divalent metal cation is required as a cofactor.

In terms of biological role, accelerates the degradation of transcripts by removing pyrophosphate from the 5'-end of triphosphorylated RNA, leading to a more labile monophosphorylated state that can stimulate subsequent ribonuclease cleavage. In Shewanella piezotolerans (strain WP3 / JCM 13877), this protein is RNA pyrophosphohydrolase.